We begin with the raw amino-acid sequence, 506 residues long: Galactose/methyl galactoside import ATP-binding protein MglA (506 aa).

ABC transporter domains follow at residues 14-249 and 264-506; these read LEMS…VGRS and VILE…SLHL. 46–53 serves as a coordination point for ATP; sequence GENGAGKS.

Belongs to the ABC transporter superfamily. Galactose/methyl galactoside importer (TC 3.A.1.2.3) family. In terms of assembly, the complex is composed of one ATP-binding protein (MglA), two transmembrane proteins (MglC) and a solute-binding protein (MglB).

Its subcellular location is the cell inner membrane. The enzyme catalyses D-galactose(out) + ATP + H2O = D-galactose(in) + ADP + phosphate + H(+). It carries out the reaction methyl beta-D-galactoside(out) + ATP + H2O = methyl beta-D-galactoside(in) + ADP + phosphate + H(+). Part of the ABC transporter complex MglABC involved in galactose/methyl galactoside import. Responsible for energy coupling to the transport system. In Yersinia pestis bv. Antiqua (strain Antiqua), this protein is Galactose/methyl galactoside import ATP-binding protein MglA.